The following is a 651-amino-acid chain: Probable potassium transport system protein Kup (651 aa).

A run of 12 helical transmembrane segments spans residues leucine 41–phenylalanine 61, valine 82–valine 102, leucine 130–proline 150, isoleucine 163–leucine 183, valine 194–leucine 214, phenylalanine 235–threonine 255, tryptophan 276–leucine 296, methionine 309–alanine 329, isoleucine 366–phenylalanine 386, alanine 395–methionine 415, alanine 426–isoleucine 446, and glutamate 450–valine 470.

It belongs to the HAK/KUP transporter (TC 2.A.72) family.

It localises to the cell inner membrane. It catalyses the reaction K(+)(in) + H(+)(in) = K(+)(out) + H(+)(out). In terms of biological role, transport of potassium into the cell. Likely operates as a K(+):H(+) symporter. The sequence is that of Probable potassium transport system protein Kup from Brucella melitensis biotype 2 (strain ATCC 23457).